A 447-amino-acid chain; its full sequence is Putative vacuolar cation/proton exchanger 4 (447 aa).

Residues 1–29 (MDKSEMDKINGTNPESTDQAPSLASRPDE) are disordered. At 1–65 (MDKSEMDKIN…VNWGVFGSMK (65 aa)) the chain is on the cytoplasmic side. The segment covering 10–22 (NGTNPESTDQAPS) has biased composition (polar residues). The chain crosses the membrane as a helical span at residues 66–86 (IVFLKSKLNVLIPCGFLAIFL). Over 87 to 93 (NYMTQRY) the chain is Extracellular. The helical transmembrane segment at 94–114 (GWVFPLSMLGIIPLAERLGFA) threads the bilayer. Over 115-122 (TDWQISCE) the chain is Cytoplasmic. A helical transmembrane segment spans residues 123 to 143 (VGRLLNSAFGNATELIISIHA). A cation selection region spans residues 132-167 (GNATELIISIHALSRGKLHVVQQCLLGSILSNLLLV). Over 144-159 (LSRGKLHVVQQCLLGS) the chain is Extracellular. Residues 160–180 (ILSNLLLVLGSAFFSGGLACG) form a helical membrane-spanning segment. The Cytoplasmic portion of the chain corresponds to 181 to 190 (KTMQTFSKAD). A helical membrane pass occupies residues 191–211 (AVVNSGLLLMAVMGLLIPAAL). The Extracellular segment spans residues 212–224 (HYTHSEAQFGKSE). The helical transmembrane segment at 225 to 245 (LALSRFSSCIMLVAYASYLYF) threads the bilayer. The Cytoplasmic segment spans residues 246–286 (QLSNNRRRNEANVYPCMPLIKRRIQDDVDGNDDEVPEISKR). Residues 287–307 (EAISWIAIFIAWISMLSYYLV) form a helical membrane-spanning segment. The Extracellular portion of the chain corresponds to 308–318 (DAIDGASKAWN). Residues 319-339 (IPVAFISVVLLPVVGNSAGHA) traverse the membrane as a helical segment. The segment at 333–368 (GNSAGHANAVMFAVKDKLDISLGVAIGSSIQISMFG) is cation selection. The Cytoplasmic portion of the chain corresponds to 340-353 (NAVMFAVKDKLDIS). A helical transmembrane segment spans residues 354–374 (LGVAIGSSIQISMFGIPFCVV). The Extracellular segment spans residues 375–384 (MGWMMGKPMD). The chain crosses the membrane as a helical span at residues 385–405 (LNFHLFETASLLTTVLVVAFL). The Cytoplasmic portion of the chain corresponds to 406 to 413 (LQDGTSNC). Residues 414-434 (VKGLMLFLCYLIVAASFYVHA) traverse the membrane as a helical segment. Residues 435–447 (DPNSKASEKPPQN) are Extracellular-facing.

This sequence belongs to the Ca(2+):cation antiporter (CaCA) (TC 2.A.19) family. Cation/proton exchanger (CAX) subfamily.

It localises to the vacuole membrane. Its function is as follows. Vacuolar cation/proton exchanger (CAX). Translocates Ca(2+) and other metal ions into vacuoles using the proton gradient formed by H(+)-ATPase and H(+)-pyrophosphatase. In Oryza sativa subsp. japonica (Rice), this protein is Putative vacuolar cation/proton exchanger 4.